A 211-amino-acid polypeptide reads, in one-letter code: Peroxiredoxin (211 aa).

The 155-residue stretch at 2–156 (PLLGDDFPEL…ILRAVKVLQI (155 aa)) folds into the Thioredoxin domain. Cys-44 (cysteine sulfenic acid (-SOH) intermediate) is an active-site residue. Arg-119 is a binding site for substrate. A disulfide bridge connects residues Cys-199 and Cys-205.

Belongs to the peroxiredoxin family. Prx6 subfamily. In terms of assembly, homodecamer. Pentamer of dimers that assemble into a ring structure.

The protein resides in the cytoplasm. The catalysed reaction is a hydroperoxide + [thioredoxin]-dithiol = an alcohol + [thioredoxin]-disulfide + H2O. Its function is as follows. Thiol-specific peroxidase that catalyzes the reduction of hydrogen peroxide and organic hydroperoxides to water and alcohols, respectively. Plays a role in cell protection against oxidative stress by detoxifying peroxides. This Chlorobaculum tepidum (strain ATCC 49652 / DSM 12025 / NBRC 103806 / TLS) (Chlorobium tepidum) protein is Peroxiredoxin.